We begin with the raw amino-acid sequence, 64 residues long: DNA gyrase inhibitor YacG (64 aa).

Zn(2+) is bound by residues C7, C10, C26, and C30. The segment at 44-64 (SIPGEPVVIANDDYNNEESDY) is disordered.

Belongs to the DNA gyrase inhibitor YacG family. In terms of assembly, interacts with GyrB. It depends on Zn(2+) as a cofactor.

Functionally, inhibits all the catalytic activities of DNA gyrase by preventing its interaction with DNA. Acts by binding directly to the C-terminal domain of GyrB, which probably disrupts DNA binding by the gyrase. This is DNA gyrase inhibitor YacG from Idiomarina loihiensis (strain ATCC BAA-735 / DSM 15497 / L2-TR).